The following is a 675-amino-acid chain: Vacuolar protein sorting-associated protein 5 (675 aa).

Disordered stretches follow at residues 1–26, 65–84, and 165–219; these read MDYEDNLEAPVWDELNHEGDKTQSLV, EWKDPGLSVAGNPQLEEHDN, and RAQR…RREN. The segment covering 168–180 has biased composition (basic residues); it reads RNSKRNHSLKAKR. Residues 195–204 show a composition bias toward basic and acidic residues; it reads PLKKAEKENE. One can recognise a PX domain in the interval 279–394; the sequence is VAFKVEVKDP…LFLTSDDFSS (116 aa). Residues Arg-320, Lys-346, and Arg-360 each coordinate a 1,2-diacyl-sn-glycero-3-phospho-(1D-myo-inositol-3-phosphate).

It belongs to the sorting nexin family. As to quaternary structure, component of the retromer complex which consists of VPS29, VPS26, VPS35, VPS5 and VPS17. Component of a retromer subcomplex consisting of VPSD5 and VPS17. Phosphorylated on serine residue(s).

The protein resides in the cytoplasm. It localises to the golgi apparatus membrane. It is found in the endosome membrane. In terms of biological role, plays a role in vesicular protein sorting. Required for retention of late Golgi membrane proteins and vacuolar biogenesis. Component of the membrane-associated retromer complex which is essential in endosome-to-Golgi retrograde transport. The VPS5-VPS17 subcomplex may assemble onto the membrane to promote vesicle formation. The protein is Vacuolar protein sorting-associated protein 5 (VPS5) of Saccharomyces cerevisiae (strain ATCC 204508 / S288c) (Baker's yeast).